The primary structure comprises 174 residues: Interferon gamma (174 aa).

An N-terminal signal peptide occupies residues 1–23; the sequence is MHTTRCILALLLCLTQAMSGCYC. Gln24 is subject to Pyrrolidone carboxylic acid. N-linked (GlcNAc...) asparagine glycans are attached at residues Asn39 and Asn106.

This sequence belongs to the type II (or gamma) interferon family. Homodimer. Interacts with IFNGR1 (via extracellular domain); this interaction promotes IFNGR1 dimerization. Released primarily from activated T lymphocytes.

It is found in the secreted. Its function is as follows. Type II interferon produced by immune cells such as T-cells and NK cells that plays crucial roles in antimicrobial, antiviral, and antitumor responses by activating effector immune cells and enhancing antigen presentation. Primarily signals through the JAK-STAT pathway after interaction with its receptor IFNGR1 to affect gene regulation. Upon IFNG binding, IFNGR1 intracellular domain opens out to allow association of downstream signaling components JAK2, JAK1 and STAT1, leading to STAT1 activation, nuclear translocation and transcription of IFNG-regulated genes. Many of the induced genes are transcription factors such as IRF1 that are able to further drive regulation of a next wave of transcription. Plays a role in class I antigen presentation pathway by inducing a replacement of catalytic proteasome subunits with immunoproteasome subunits. In turn, increases the quantity, quality, and repertoire of peptides for class I MHC loading. Increases the efficiency of peptide generation also by inducing the expression of activator PA28 that associates with the proteasome and alters its proteolytic cleavage preference. Up-regulates as well MHC II complexes on the cell surface by promoting expression of several key molecules such as cathepsins B/CTSB, H/CTSH, and L/CTSL. Participates in the regulation of hematopoietic stem cells during development and under homeostatic conditions by affecting their development, quiescence, and differentiation. The polypeptide is Interferon gamma (IFNG) (Mesocricetus auratus (Golden hamster)).